A 166-amino-acid polypeptide reads, in one-letter code: Ribosome maturation factor RimM (166 aa).

The region spanning 91-165 is the PRC barrel domain; the sequence is DDEFYHADLI…RIVADPPEGL (75 aa).

The protein belongs to the RimM family. Binds ribosomal protein uS19.

The protein resides in the cytoplasm. Functionally, an accessory protein needed during the final step in the assembly of 30S ribosomal subunit, possibly for assembly of the head region. Essential for efficient processing of 16S rRNA. May be needed both before and after RbfA during the maturation of 16S rRNA. It has affinity for free ribosomal 30S subunits but not for 70S ribosomes. The polypeptide is Ribosome maturation factor RimM (Dinoroseobacter shibae (strain DSM 16493 / NCIMB 14021 / DFL 12)).